The following is a 462-amino-acid chain: tRNA pseudouridine(32) synthase, mitochondrial (462 aa).

A mitochondrion-targeting transit peptide spans 1–24; the sequence is MQRNNRLRNLFTVPVIMARQLKRN. The region spanning 127–188 is the S4 RNA-binding domain; the sequence is KLVDVFISEF…HEPPVTSRPI (62 aa). Aspartate 238 is a catalytic residue.

This sequence belongs to the pseudouridine synthase RluA family.

It is found in the mitochondrion. The enzyme catalyses uridine(32) in tRNA = pseudouridine(32) in tRNA. Its function is as follows. Responsible for synthesis of pseudouridine from uracil-32 in mitochondrial transfer RNAs. This chain is tRNA pseudouridine(32) synthase, mitochondrial (PUS9), found in Saccharomyces cerevisiae (strain ATCC 204508 / S288c) (Baker's yeast).